Reading from the N-terminus, the 597-residue chain is Gamma-terpinene synthase, chloroplastic (597 aa).

The N-terminal 47 residues, 1 to 47, are a transit peptide targeting the chloroplast; it reads MATLSMQVSILSKQVKNLNSFGMRASKLPMVARRVDVSTTRLRPICS. Positions 350 and 354 each coordinate Mn(2+). Positions 350–354 match the DDXXD motif motif; it reads DDVYD. Homodimerization stretches follow at residues 356–362 and 428–465; these read YGTLDEL and EAKW…FTLP. 2 residues coordinate Mn(2+): aspartate 494 and glutamate 502.

The protein belongs to the terpene synthase family. As to quaternary structure, homodimer. Mn(2+) serves as cofactor. Requires Mg(2+) as cofactor.

It is found in the plastid. Its subcellular location is the chloroplast. It carries out the reaction (2E)-geranyl diphosphate = gamma-terpinene + diphosphate. Its pathway is secondary metabolite biosynthesis; terpenoid biosynthesis. Its function is as follows. Involved in the biosynthesis of phenolic monoterpenes natural products thymol and carvacrol which have a broad range of biological activities acting as antimicrobial compounds, insecticides, antioxidants and pharmaceutical agents. Monoterpene synthase which catalyzes the conversion of geranyl diphosphate (GPP) to gamma-terpinene and minor amounts of other monoterpenes (e.g. alpha-thujene, alpha-terpinene, myrcene, sabinene, (+)-R-limonene, alpha-pinene and alpha-phellandrene). The chain is Gamma-terpinene synthase, chloroplastic from Thymus caespititius (Cretan thyme).